A 113-amino-acid polypeptide reads, in one-letter code: Single-stranded DNA-binding protein B (113 aa).

Residues 1–104 (MFNQVMLVGR…VLADTVRFMD (104 aa)) form the SSB domain. Position 82 is a phosphotyrosine (Tyr82).

Homotetramer. Phosphorylated by YwqD, which increases ssDNA affinity; dephosphorylated by YwqE.

Its subcellular location is the cytoplasm. In terms of biological role, not essential for replication of the chromosome, but is required for optimal competence. Binds ssDNA, binding is facilitated by DprA, acts as an accessory factor for homologous DNA strand exchange. In Bacillus subtilis (strain 168), this protein is Single-stranded DNA-binding protein B (ssbB).